The sequence spans 431 residues: Glucose-1-phosphate adenylyltransferase (431 aa).

Lysine 39 is a binding site for beta-D-fructose 1,6-bisphosphate. Residues arginine 40, histidine 46, and arginine 52 each contribute to the AMP site. Tyrosine 114 is an alpha-D-glucose 1-phosphate binding site. Residue arginine 130 coordinates AMP. Alpha-D-glucose 1-phosphate-binding positions include glycine 179, 194–195 (EK), and serine 212. The AMP site is built by glutamate 370 and arginine 386. Beta-D-fructose 1,6-bisphosphate contacts are provided by residues 419-423 (REMLR) and 429-431 (QER).

This sequence belongs to the bacterial/plant glucose-1-phosphate adenylyltransferase family. Homotetramer.

The enzyme catalyses alpha-D-glucose 1-phosphate + ATP + H(+) = ADP-alpha-D-glucose + diphosphate. The protein operates within glycan biosynthesis; glycogen biosynthesis. Its activity is regulated as follows. Allosterically activated by fructose-1,6-bisphosphate (F16BP) and inhibited by AMP. Functionally, involved in the biosynthesis of ADP-glucose, a building block required for the elongation reactions to produce glycogen. Catalyzes the reaction between ATP and alpha-D-glucose 1-phosphate (G1P) to produce pyrophosphate and ADP-Glc. The protein is Glucose-1-phosphate adenylyltransferase of Salmonella paratyphi A (strain ATCC 9150 / SARB42).